The sequence spans 353 residues: 2-Hydroxyacid oxidase 2 (353 aa).

The FMN hydroxy acid dehydrogenase domain occupies 2-353 (PLVCLTDFRE…NQDLIQFSRL (352 aa)). FMN-binding positions include 77-79 (PTG), serine 106, and glutamine 128. An a 2-oxocarboxylate-binding site is contributed by tyrosine 130. FMN is bound at residue threonine 156. An a 2-oxocarboxylate-binding site is contributed by arginine 165. Lysine 224 contributes to the FMN binding site. Histidine 248 acts as the Proton acceptor in catalysis. Residue arginine 251 participates in a 2-oxocarboxylate binding. Residues 279-283 (DGGIR) and 302-303 (GR) each bind FMN. Positions 351 to 353 (SRL) match the Microbody targeting signal motif.

The protein belongs to the FMN-dependent alpha-hydroxy acid dehydrogenase family. In terms of assembly, homotetramer. Requires FMN as cofactor.

It is found in the peroxisome. The catalysed reaction is a (2S)-2-hydroxycarboxylate + O2 = a 2-oxocarboxylate + H2O2. It carries out the reaction 2-hydroxyhexadecanoate + O2 = 2-oxohexadecanoate + H2O2. It catalyses the reaction 2-hydroxyoctanoate + O2 = 2-oxooctanoate + H2O2. Its pathway is lipid metabolism; fatty acid metabolism. Functionally, oxidase that catalyzes the oxidation of medium and long chain hydroxyacids such as 2-hydroxyhexadecanoate and 2-hydroxyoctanoate, to the correspondong 2-oxoacids. Its role in the oxidation of 2-hydroxy fatty acids may contribute to the general pathway of fatty acid alpha-oxidation. Active in vitro with the artificial electron acceptor 2,6-dichlorophenolindophenol (DCIP), but O2 is believed to be the physiological electron acceptor, leading to the production of H2O2. The sequence is that of 2-Hydroxyacid oxidase 2 (HAO2) from Bos taurus (Bovine).